An 864-amino-acid chain; its full sequence is Structure-specific endonuclease subunit SLX4 (864 aa).

Disordered stretches follow at residues 1 to 21 (MTTQ…PVIP), 49 to 69 (LSTS…KTQG), 91 to 113 (TGTG…PGNA), 161 to 190 (ANQT…GNDH), 289 to 318 (LSDD…NRPK), 346 to 385 (TLLS…NEPP), 413 to 433 (ANGH…ISNS), and 625 to 767 (KAPN…VTSS). Over residues 295-306 (SSITEDSESATS) the composition is skewed to polar residues. The span at 307 to 318 (KPRRVKAKNRPK) shows a compositional bias: basic residues. The segment covering 656–668 (QPNSISQKATTQV) has biased composition (polar residues). The segment covering 685–695 (VSSRRSTSTSK) has biased composition (low complexity). A compositionally biased stretch (polar residues) spans 743 to 767 (PESFNLPTTPLTIRSGKVPSTVTSS).

Belongs to the SLX4 family. In terms of assembly, forms a heterodimer with SLX1. In terms of processing, phosphorylated in response to DNA damage.

It is found in the nucleus. Its function is as follows. Regulatory subunit of the SLX1-SLX4 structure-specific endonuclease that resolves DNA secondary structures generated during DNA repair and recombination. Has endonuclease activity towards branched DNA substrates, introducing single-strand cuts in duplex DNA close to junctions with ss-DNA. This Paracoccidioides lutzii (strain ATCC MYA-826 / Pb01) (Paracoccidioides brasiliensis) protein is Structure-specific endonuclease subunit SLX4.